Here is a 394-residue protein sequence, read N- to C-terminus: Xylose isomerase (394 aa).

Catalysis depends on residues histidine 54 and aspartate 57. Positions 181, 217, 220, 245, 255, 257, and 292 each coordinate Mg(2+).

The protein belongs to the xylose isomerase family. In terms of assembly, homotetramer. It depends on Mg(2+) as a cofactor.

Its subcellular location is the cytoplasm. It catalyses the reaction alpha-D-xylose = alpha-D-xylulofuranose. The chain is Xylose isomerase (xylA) from Actinoplanes missouriensis (strain ATCC 14538 / DSM 43046 / CBS 188.64 / JCM 3121 / NBRC 102363 / NCIMB 12654 / NRRL B-3342 / UNCC 431).